Consider the following 184-residue polypeptide: Elongation factor P (184 aa).

This sequence belongs to the elongation factor P family.

Its subcellular location is the cytoplasm. It functions in the pathway protein biosynthesis; polypeptide chain elongation. In terms of biological role, involved in peptide bond synthesis. Stimulates efficient translation and peptide-bond synthesis on native or reconstituted 70S ribosomes in vitro. Probably functions indirectly by altering the affinity of the ribosome for aminoacyl-tRNA, thus increasing their reactivity as acceptors for peptidyl transferase. The protein is Elongation factor P of Mycoplasma mycoides subsp. mycoides SC (strain CCUG 32753 / NCTC 10114 / PG1).